The sequence spans 187 residues: UPF0200 protein PYRAB09750 (187 aa).

Residue 7–14 coordinates ATP; it reads GMPGSGKG.

The protein belongs to the UPF0200 family.

The polypeptide is UPF0200 protein PYRAB09750 (Pyrococcus abyssi (strain GE5 / Orsay)).